The following is an 891-amino-acid chain: MYKSIDVVRQEFLDFFHKQEHQVVPSSSLVPKNDQTLLFTNSGMNQFKDIFLGLVKPSYKRVVTAQRCMRAGGKHNDLNNVGYTECHLTFFEMLGNFSFGDYFKDDAIQFAWELLTDSNWFGLSKDKIWVTTHIEDDESYNIWVKQVGISTKRIVKIGNKNSDLYDSDNFWQMGNIGPCGPCSEIFYDFGSDLKGKPPGYMQGLGSRYIEIWNLVFMQFNRQLNDRLIDLPMLSVDTGMGLERITAILQGVHSNYLIDVFKNLIVDISNIMKVKEYINNRSLYVIADHIRACVFLIKDGVVPSNEGQGYVLRRIIRRSVRHGRKLGVNDIFLYKLVNLVIVHMNYVSNILYDQKDLIEQILFNEEKLFNNTLKKGLELLEKSLKNLNQDKILSGEIAFQLYTTYGFPLELTKDICCERNIKVDQLEFDQIMLTERRNSKRLSQFHKNFNNIILSSYAKTSTFVGYKCFSCQSKIIALLQDNELINKMCDVDQESMVILDITPFYGESGGQIGDSGYLKGECGVFKVKNTKKYGQIIVHIGVLISGIFLIGEQVFAQVNRLKRKDISVNHSSTHLLHSALLKILGSHVTQQGSLINDKYFRFDFSHYNAITITQINEVENLINQQIWDNLLVTENIMLMESARNIGAIMLLHKQYTEKVRVIQIGDCSIELCGGTHVSNTNEIGLFIITKEFGIGSGVRRIEAVTKNAALSVIQNKKKLIQNIAQIAQSDDVNLLNVIHEFKARYEKLDREIKLLNSKQEIQKVLSLVREVYYIKNVRVLVNHVKNMESSSLFKMVKLLKHYLQSGIVVLINIRKNNIAHIVISITKDLVECNRIYAIDLIQYIIRSVKNGKGGGRFDFAQLNINNVKNVSELVIQIQSLLNDIICNIKSIK.

Residues His-569, His-573, Cys-671, and His-675 each contribute to the Zn(2+) site.

Belongs to the class-II aminoacyl-tRNA synthetase family. In terms of assembly, homotetramer. It depends on Zn(2+) as a cofactor.

The protein localises to the cytoplasm. It carries out the reaction tRNA(Ala) + L-alanine + ATP = L-alanyl-tRNA(Ala) + AMP + diphosphate. In terms of biological role, catalyzes the attachment of alanine to tRNA(Ala) in a two-step reaction: alanine is first activated by ATP to form Ala-AMP and then transferred to the acceptor end of tRNA(Ala). Also edits incorrectly charged Ser-tRNA(Ala) and Gly-tRNA(Ala) via its editing domain. In Blochmanniella floridana, this protein is Alanine--tRNA ligase.